We begin with the raw amino-acid sequence, 129 residues long: ATP synthase epsilon chain (129 aa).

This sequence belongs to the ATPase epsilon chain family. In terms of assembly, F-type ATPases have 2 components, CF(1) - the catalytic core - and CF(0) - the membrane proton channel. CF(1) has five subunits: alpha(3), beta(3), gamma(1), delta(1), epsilon(1). CF(0) has three main subunits: a, b and c.

It is found in the cell inner membrane. Functionally, produces ATP from ADP in the presence of a proton gradient across the membrane. This Nitratiruptor sp. (strain SB155-2) protein is ATP synthase epsilon chain.